A 132-amino-acid chain; its full sequence is Z-ring associated protein G (132 aa).

The helical transmembrane segment at 1–21 threads the bilayer; sequence MTWEYALIGLVVGIIIGAVAM. The interval 95–132 is disordered; sequence FRNRLAESEASNDQAPVQMPRDYSEGASGLLRTGAKRD.

This sequence belongs to the ZapG family.

It is found in the cell inner membrane. Functionally, involved in cell division, cell envelope biogenesis and cell shape maintenance. The sequence is that of Z-ring associated protein G from Escherichia coli O157:H7.